The sequence spans 393 residues: Phosphoglycerate kinase (393 aa).

Residues 21–23 (DLN), R37, 60–63 (HLGR), R115, and R148 contribute to the substrate site. Residues K199, E321, and 347–350 (GGDT) contribute to the ATP site.

This sequence belongs to the phosphoglycerate kinase family. As to quaternary structure, monomer.

It localises to the cytoplasm. The enzyme catalyses (2R)-3-phosphoglycerate + ATP = (2R)-3-phospho-glyceroyl phosphate + ADP. Its pathway is carbohydrate degradation; glycolysis; pyruvate from D-glyceraldehyde 3-phosphate: step 2/5. In Dechloromonas aromatica (strain RCB), this protein is Phosphoglycerate kinase.